The sequence spans 870 residues: Probable inorganic carbon transporter subunit DabA (870 aa).

Residues Cys381, Asp383, His564, and Cys579 each contribute to the Zn(2+) site.

This sequence belongs to the inorganic carbon transporter (TC 9.A.2) DabA family. Forms a complex with DabB. The cofactor is Zn(2+).

The protein resides in the cell membrane. Functionally, part of an energy-coupled inorganic carbon pump. The sequence is that of Probable inorganic carbon transporter subunit DabA from Geobacillus kaustophilus (strain HTA426).